Reading from the N-terminus, the 221-residue chain is MDSPESSDRGLNPMTPDHGGHNGKVVHYFGQGVEGGPASPRKLGHGHLHPKANTALLLLRLLTFAFSLASLVIMATNSATTTATAGRHRTVNWVDFDTYRYVLAACAIVCLYSFAEIGLGLWYLLKGRMVMPESMAHWFDFGHDQGFAYLIFSACSGATAVAHNLRERHILIHGMYGCDEANSFCMKAEISIGLAFGAFLFIALSSLLSGYRLVKWLILGP.

The segment at 1–21 (MDSPESSDRGLNPMTPDHGGH) is disordered. The Cytoplasmic segment spans residues 1 to 54 (MDSPESSDRGLNPMTPDHGGHNGKVVHYFGQGVEGGPASPRKLGHGHLHPKANT). Residues 55–75 (ALLLLRLLTFAFSLASLVIMA) traverse the membrane as a helical segment. At 76–101 (TNSATTTATAGRHRTVNWVDFDTYRY) the chain is on the extracellular side. Residues 102-122 (VLAACAIVCLYSFAEIGLGLW) traverse the membrane as a helical segment. Residues 123 to 144 (YLLKGRMVMPESMAHWFDFGHD) are Cytoplasmic-facing. A helical membrane pass occupies residues 145–165 (QGFAYLIFSACSGATAVAHNL). Over 166-189 (RERHILIHGMYGCDEANSFCMKAE) the chain is Extracellular. The helical transmembrane segment at 190 to 210 (ISIGLAFGAFLFIALSSLLSG) threads the bilayer. Residues 211-221 (YRLVKWLILGP) are Cytoplasmic-facing.

This sequence belongs to the Casparian strip membrane proteins (CASP) family. As to quaternary structure, homodimer and heterodimers.

The protein localises to the cell membrane. The sequence is that of CASP-like protein 4C1 from Pteridium aquilinum subsp. aquilinum (Bracken fern).